The sequence spans 433 residues: Enolase (433 aa).

Gln167 lines the (2R)-2-phosphoglycerate pocket. Glu209 functions as the Proton donor in the catalytic mechanism. Mg(2+)-binding residues include Asp246, Glu291, and Asp318. The (2R)-2-phosphoglycerate site is built by Lys343, Arg372, Ser373, and Lys394. The active-site Proton acceptor is Lys343.

The protein belongs to the enolase family. Component of the RNA degradosome, a multiprotein complex involved in RNA processing and mRNA degradation. It depends on Mg(2+) as a cofactor.

The protein localises to the cytoplasm. It is found in the secreted. The protein resides in the cell surface. It carries out the reaction (2R)-2-phosphoglycerate = phosphoenolpyruvate + H2O. Its pathway is carbohydrate degradation; glycolysis; pyruvate from D-glyceraldehyde 3-phosphate: step 4/5. Its function is as follows. Catalyzes the reversible conversion of 2-phosphoglycerate (2-PG) into phosphoenolpyruvate (PEP). It is essential for the degradation of carbohydrates via glycolysis. This is Enolase from Pasteurella multocida (strain Pm70).